The chain runs to 221 residues: ATP-dependent Clp protease proteolytic subunit 3 (221 aa).

Ser-118 acts as the Nucleophile in catalysis. His-143 is an active-site residue.

This sequence belongs to the peptidase S14 family. In terms of assembly, fourteen ClpP subunits assemble into 2 heptameric rings which stack back to back to give a disk-like structure with a central cavity, resembling the structure of eukaryotic proteasomes.

Its subcellular location is the cytoplasm. It catalyses the reaction Hydrolysis of proteins to small peptides in the presence of ATP and magnesium. alpha-casein is the usual test substrate. In the absence of ATP, only oligopeptides shorter than five residues are hydrolyzed (such as succinyl-Leu-Tyr-|-NHMec, and Leu-Tyr-Leu-|-Tyr-Trp, in which cleavage of the -Tyr-|-Leu- and -Tyr-|-Trp bonds also occurs).. Functionally, cleaves peptides in various proteins in a process that requires ATP hydrolysis. Has a chymotrypsin-like activity. Plays a major role in the degradation of misfolded proteins. The polypeptide is ATP-dependent Clp protease proteolytic subunit 3 (Nocardia farcinica (strain IFM 10152)).